The following is a 480-amino-acid chain: Glycogen synthase (480 aa).

An ADP-alpha-D-glucose-binding site is contributed by Lys-15.

This sequence belongs to the glycosyltransferase 1 family. Bacterial/plant glycogen synthase subfamily.

It catalyses the reaction [(1-&gt;4)-alpha-D-glucosyl](n) + ADP-alpha-D-glucose = [(1-&gt;4)-alpha-D-glucosyl](n+1) + ADP + H(+). It participates in glycan biosynthesis; glycogen biosynthesis. Functionally, synthesizes alpha-1,4-glucan chains using ADP-glucose. The chain is Glycogen synthase from Rhizobium johnstonii (strain DSM 114642 / LMG 32736 / 3841) (Rhizobium leguminosarum bv. viciae).